We begin with the raw amino-acid sequence, 388 residues long: MNLHEYQAKSLFAEYGLPVSEGFACDTAQEAVEAAGHIGGNLWVVKCQVHAGGRGKAGGVKVTGNKDEIRAFAENWLGKNLVTYQTDAKGQPVAKILVESCTDIANELYLGAVVDRSTRRVVFMASTEGGVDIETVAEHTPELIHTAIIDPLTGPQAFQARDLGFKLGLNPTQMKQFTKIFMGLANMFNDHDFALLEINPLVITTEGNLHCLDGKIGIDGNALFRQPKIKAMHDPSQDDAREAHAAKFELNYVALDGNVGCMVNGAGLAMGTMDIVNLHGGKPANFLDVGGGATKERVAEAFKIILSDSNVKAVLVNIFGGIVRCDMIAEGIIGAVKEVGVKVPVVVRLEGTNAELGREVLAKSGLDIIAATSLTDAAEQVVKAAEGK.

The 236-residue stretch at 9–244 folds into the ATP-grasp domain; that stretch reads KSLFAEYGLP…PSQDDAREAH (236 aa). Residues Lys-46, 53–55, Glu-99, Thr-102, and Glu-107 each bind ATP; that span reads GRG. Positions 199 and 213 each coordinate Mg(2+). Substrate is bound by residues Asn-264 and 321–323; that span reads GIV.

This sequence belongs to the succinate/malate CoA ligase beta subunit family. As to quaternary structure, heterotetramer of two alpha and two beta subunits. Mg(2+) is required as a cofactor.

It catalyses the reaction succinate + ATP + CoA = succinyl-CoA + ADP + phosphate. The catalysed reaction is GTP + succinate + CoA = succinyl-CoA + GDP + phosphate. It participates in carbohydrate metabolism; tricarboxylic acid cycle; succinate from succinyl-CoA (ligase route): step 1/1. Succinyl-CoA synthetase functions in the citric acid cycle (TCA), coupling the hydrolysis of succinyl-CoA to the synthesis of either ATP or GTP and thus represents the only step of substrate-level phosphorylation in the TCA. The beta subunit provides nucleotide specificity of the enzyme and binds the substrate succinate, while the binding sites for coenzyme A and phosphate are found in the alpha subunit. This Shewanella frigidimarina (strain NCIMB 400) protein is Succinate--CoA ligase [ADP-forming] subunit beta.